A 450-amino-acid polypeptide reads, in one-letter code: MGKYFGTDGVRGEANVELTPELAFKLGRFGGYVLSQHETGRPKVFVARDTRISGEMLESALVAGLLSVGIEVYKLGVLATPGVSYLVRTENASAGVMISASHNPALDNGIKFFGGDGFKLDDAREAEIEALLDAAEDTLPRPSAEGLGTLVDYPEGLRKYEKFLVTTGLDLGGMKVALDAANGAAAVSARNIFLDLNAEIAVIGDQPDGLNINAGVGSTHPEQLQALVRESGSAIGLAFDGDSDRLIAVDENGDIVDGDKVMYIIGKYLSQKGELAKNTIVTTVMSNLGFHKALDREGINKAVTAVGDRYVVEEMRKNGYNLGGEQSGHVIIMDYNTTGDGQLTAIQLTKVMVETGKSLSELAAEVTIYPQKLVNIRVENSMKDKAMDVPAIAAIIEKMEAEMAGNGRILVRPSGTEPLLRVMAEAPTDDEVNYYVDTIADVVRAEIGLD.

S101 functions as the Phosphoserine intermediate in the catalytic mechanism. Mg(2+)-binding residues include S101, D240, D242, and D244. Phosphoserine is present on S101.

This sequence belongs to the phosphohexose mutase family. The cofactor is Mg(2+). In terms of processing, activated by phosphorylation.

It carries out the reaction alpha-D-glucosamine 1-phosphate = D-glucosamine 6-phosphate. Functionally, catalyzes the conversion of glucosamine-6-phosphate to glucosamine-1-phosphate. In Streptococcus thermophilus (strain ATCC BAA-250 / LMG 18311), this protein is Phosphoglucosamine mutase.